A 542-amino-acid chain; its full sequence is LysM domain-containing protein ARB_00327 (542 aa).

An N-terminal signal peptide occupies residues 1–35; the sequence is MLSSVLFPAMRTLLLLKYVFSLISLSAICCQTVSA. 4 N-linked (GlcNAc...) asparagine glycosylation sites follow: N218, N298, N381, and N415. One can recognise a LysM 1 domain in the interval 264-310; sequence RWYGVKKGDYCNLIVLKFGITMDNFIFLNPALNSNCTNLYAEESYCV. Positions 439–484 are disordered; the sequence is DSDEPTPTTPITTSDDPTSTSATPTTPTTSSKPSPGAPTMTGQPSA. The segment covering 443–472 has biased composition (low complexity); it reads PTPTTPITTSDDPTSTSATPTTPTTSSKPS. One can recognise a LysM 2 domain in the interval 487-534; it reads KWHTVTNGESCTVIPKTFGITLEQFLAWNPTVKSDCTENFWAGYAYCV.

The protein localises to the secreted. In terms of biological role, might have a role in sequestration of chitin oligosaccharides (breakdown products of fungal cell walls that are released during invasion and act as triggers of host immunity) to dampen host defense. This chain is LysM domain-containing protein ARB_00327, found in Arthroderma benhamiae (strain ATCC MYA-4681 / CBS 112371) (Trichophyton mentagrophytes).